The sequence spans 159 residues: Cytochrome c-type biogenesis protein CcmE (159 aa).

Topologically, residues 1–8 are cytoplasmic; it reads MNPRRKTR. Residues 9 to 29 traverse the membrane as a helical; Signal-anchor for type II membrane protein segment; the sequence is LWVALTVLAGLGLTMALVLYA. Residues 30–159 are Periplasmic-facing; sequence LRANIDLFYT…PPQAYKDNRP (130 aa). His-130 and Tyr-134 together coordinate heme. The interval 130 to 159 is disordered; the sequence is HDENYTPPEVKAAMDANHTRPPQAYKDNRP.

Belongs to the CcmE/CycJ family.

It localises to the cell inner membrane. Functionally, heme chaperone required for the biogenesis of c-type cytochromes. Transiently binds heme delivered by CcmC and transfers the heme to apo-cytochromes in a process facilitated by CcmF and CcmH. The polypeptide is Cytochrome c-type biogenesis protein CcmE (Cronobacter sakazakii (strain ATCC BAA-894) (Enterobacter sakazakii)).